The following is a 248-amino-acid chain: Sperm-specific protein Don juan (248 aa).

The stretch at 82 to 147 forms a coiled coil; that stretch reads KEGNQDELEN…EKKTKCAKKD (66 aa). Residues 146–200 are disordered; that stretch reads KDPCKKKDPCKKKDPCKKKDPCKKKDPCKKKDPCKKKDPCKKKDPCKKKGGDLKK. Repeat copies occupy residues 147–152, 153–158, 159–164, 165–170, 171–176, 177–182, 183–188, and 189–194. Residues 147–194 are 8 X 6 AA tandem repeat of D-P-C-K-K-K; it reads DPCKKKDPCKKKDPCKKKDPCKKKDPCKKKDPCKKKDPCKKKDPCKKK. A coiled-coil region spans residues 197–244; it reads DLKKKCKKLAEKEKCKKLAKKEKMKKLQKKCKKMAQKEKCKKMAKKDK.

Expression limited to post-meiotic male germ cells. Expressed in elongated spermatids during individualization and in finally elongated nuclei of spermatids. After completion of nuclear shaping it is no longer expressed in the sperm heads with the onset of individualization.

It is found in the nucleus. The protein resides in the mitochondrion. In terms of biological role, may be involved in the final steps of mitochondrial differentiation within the flagellum. This Drosophila melanogaster (Fruit fly) protein is Sperm-specific protein Don juan (dj).